The chain runs to 315 residues: Aspartate carbamoyltransferase catalytic subunit (315 aa).

Residues R64 and T65 each coordinate carbamoyl phosphate. Residue K92 participates in L-aspartate binding. Carbamoyl phosphate is bound by residues R114, H142, and Q145. L-aspartate-binding residues include R175 and R229. Carbamoyl phosphate contacts are provided by G270 and P271.

The protein belongs to the aspartate/ornithine carbamoyltransferase superfamily. ATCase family. As to quaternary structure, heterododecamer (2C3:3R2) of six catalytic PyrB chains organized as two trimers (C3), and six regulatory PyrI chains organized as three dimers (R2).

It carries out the reaction carbamoyl phosphate + L-aspartate = N-carbamoyl-L-aspartate + phosphate + H(+). It functions in the pathway pyrimidine metabolism; UMP biosynthesis via de novo pathway; (S)-dihydroorotate from bicarbonate: step 2/3. Functionally, catalyzes the condensation of carbamoyl phosphate and aspartate to form carbamoyl aspartate and inorganic phosphate, the committed step in the de novo pyrimidine nucleotide biosynthesis pathway. In Methylorubrum populi (strain ATCC BAA-705 / NCIMB 13946 / BJ001) (Methylobacterium populi), this protein is Aspartate carbamoyltransferase catalytic subunit.